We begin with the raw amino-acid sequence, 127 residues long: Large ribosomal subunit protein eL8 (127 aa).

The protein belongs to the eukaryotic ribosomal protein eL8 family. In terms of assembly, part of the 50S ribosomal subunit. Probably part of the RNase P complex.

It localises to the cytoplasm. In terms of biological role, multifunctional RNA-binding protein that recognizes the K-turn motif in ribosomal RNA, the RNA component of RNase P, box H/ACA, box C/D and box C'/D' sRNAs. This Hyperthermus butylicus (strain DSM 5456 / JCM 9403 / PLM1-5) protein is Large ribosomal subunit protein eL8.